Reading from the N-terminus, the 167-residue chain is Antibacterial peptide PMAP-37 (167 aa).

A signal peptide spans 1-29 (METQRASLCLGRWSLWLLLLALVVPSASA). Positions 30–130 (QALSYREAVL…DITCNEIQSV (101 aa)) are excised as a propeptide. 2 disulfide bridges follow: Cys85-Cys96 and Cys107-Cys124.

This sequence belongs to the cathelicidin family.

Its subcellular location is the secreted. Exerts antimicrobial activity against both Gram-positive and negative bacteria with minimal inhibitory concentrations ranging over 1-4 micro molar. Its activity appears to be mediated by its ability to damage bacterial membranes. This Sus scrofa (Pig) protein is Antibacterial peptide PMAP-37 (PMAP37).